A 250-amino-acid chain; its full sequence is Leucyl/phenylalanyl-tRNA--protein transferase (250 aa).

The protein belongs to the L/F-transferase family.

The protein resides in the cytoplasm. The catalysed reaction is N-terminal L-lysyl-[protein] + L-leucyl-tRNA(Leu) = N-terminal L-leucyl-L-lysyl-[protein] + tRNA(Leu) + H(+). The enzyme catalyses N-terminal L-arginyl-[protein] + L-leucyl-tRNA(Leu) = N-terminal L-leucyl-L-arginyl-[protein] + tRNA(Leu) + H(+). It carries out the reaction L-phenylalanyl-tRNA(Phe) + an N-terminal L-alpha-aminoacyl-[protein] = an N-terminal L-phenylalanyl-L-alpha-aminoacyl-[protein] + tRNA(Phe). Its function is as follows. Functions in the N-end rule pathway of protein degradation where it conjugates Leu, Phe and, less efficiently, Met from aminoacyl-tRNAs to the N-termini of proteins containing an N-terminal arginine or lysine. This Xanthomonas oryzae pv. oryzae (strain MAFF 311018) protein is Leucyl/phenylalanyl-tRNA--protein transferase.